The chain runs to 209 residues: MTMIKICGLSTPETIEAAVQAGATHVGLVHFAKSPRHVELEKAAELRALVPESVKAVLLLVNEQPEETARAIQIVKPDVVQFHGSETPQWTKAVRDQLGIEVWKALGVREAATLEKSRRYEGAVDRLLFDSPAKKLPGGNGVTFQWDVLAGFEHHTAWGLAGGLTPDNVGDAIRQTGAELVDASSGVESAPGVKDIAKIEAFCEAARNA.

It belongs to the TrpF family.

It catalyses the reaction N-(5-phospho-beta-D-ribosyl)anthranilate = 1-(2-carboxyphenylamino)-1-deoxy-D-ribulose 5-phosphate. The protein operates within amino-acid biosynthesis; L-tryptophan biosynthesis; L-tryptophan from chorismate: step 3/5. The polypeptide is N-(5'-phosphoribosyl)anthranilate isomerase (Erythrobacter litoralis (strain HTCC2594)).